Reading from the N-terminus, the 1434-residue chain is DNA-directed RNA polymerase subunit beta (1434 aa).

The protein belongs to the RNA polymerase beta chain family. In terms of assembly, the RNAP catalytic core consists of 2 alpha, 1 beta, 1 beta' and 1 omega subunit. When a sigma factor is associated with the core the holoenzyme is formed, which can initiate transcription.

The catalysed reaction is RNA(n) + a ribonucleoside 5'-triphosphate = RNA(n+1) + diphosphate. DNA-dependent RNA polymerase catalyzes the transcription of DNA into RNA using the four ribonucleoside triphosphates as substrates. This chain is DNA-directed RNA polymerase subunit beta, found in Ureaplasma parvum serovar 3 (strain ATCC 700970).